The primary structure comprises 737 residues: Ribosome-releasing factor 2, mitochondrial (737 aa).

The transit peptide at 1–29 directs the protein to the mitochondrion; that stretch reads MLKYALHSGGMPRNRLLRQLSAHIFRRSY. The tr-type G domain occupies 31–310; that stretch reads SNIRNIGILA…AVNTYLPAPE (280 aa). GTP is bound by residues 40–47, 104–108, and 158–161; these read AHIDAGKT, DTPGH, and NKMD.

The protein belongs to the TRAFAC class translation factor GTPase superfamily. Classic translation factor GTPase family. EF-G/EF-2 subfamily.

It localises to the mitochondrion. Its function is as follows. Mitochondrial GTPase that mediates the disassembly of ribosomes from messenger RNA at the termination of mitochondrial protein biosynthesis. Not involved in the GTP-dependent ribosomal translocation step during translation elongation. The protein is Ribosome-releasing factor 2, mitochondrial of Drosophila pseudoobscura pseudoobscura (Fruit fly).